The chain runs to 670 residues: Transketolase (670 aa).

Substrate is bound at residue His31. Thiamine diphosphate-binding positions include His71 and 120–122; that span reads GPL. Position 161 (Asp161) interacts with Mg(2+). Gly162 and Asn191 together coordinate thiamine diphosphate. Mg(2+) is bound by residues Asn191 and Ile193. Substrate contacts are provided by His268, Arg362, and Ser389. His268 contacts thiamine diphosphate. Glu416 acts as the Proton donor in catalysis. Phe443 is a thiamine diphosphate binding site. His467, Asp475, and Arg528 together coordinate substrate.

In terms of assembly, homodimer. The cofactor is Mg(2+). Ca(2+) serves as cofactor. Requires Mn(2+) as cofactor. It depends on Co(2+) as a cofactor. Thiamine diphosphate is required as a cofactor.

The catalysed reaction is D-sedoheptulose 7-phosphate + D-glyceraldehyde 3-phosphate = aldehydo-D-ribose 5-phosphate + D-xylulose 5-phosphate. In terms of biological role, catalyzes the transfer of a two-carbon ketol group from a ketose donor to an aldose acceptor, via a covalent intermediate with the cofactor thiamine pyrophosphate. The polypeptide is Transketolase (tkt) (Nostoc sp. (strain PCC 7120 / SAG 25.82 / UTEX 2576)).